The sequence spans 60 residues: Large ribosomal subunit protein bL32 (60 aa).

A compositionally biased stretch (basic residues) spans 1-20 (MACPKKKTSKSKRSMRRAAW). Residues 1 to 22 (MACPKKKTSKSKRSMRRAAWKR) are disordered.

The protein belongs to the bacterial ribosomal protein bL32 family.

The sequence is that of Large ribosomal subunit protein bL32 from Thermosynechococcus vestitus (strain NIES-2133 / IAM M-273 / BP-1).